The primary structure comprises 702 residues: Phosphoribosylformylglycinamidine synthase subunit PurL (702 aa).

H36 is an active-site residue. The ATP site is built by Y39 and K80. E82 serves as a coordination point for Mg(2+). Residues 83–86 and R105 contribute to the substrate site; that span reads SHNH. The active-site Proton acceptor is H84. D106 is a binding site for Mg(2+). Q225 is a substrate binding site. D251 serves as a coordination point for Mg(2+). 293 to 295 lines the substrate pocket; the sequence is ETQ. Positions 468 and 505 each coordinate ATP. S508 is a substrate binding site.

It belongs to the FGAMS family. As to quaternary structure, monomer. Part of the FGAM synthase complex composed of 1 PurL, 1 PurQ and 2 PurS subunits.

It is found in the cytoplasm. The catalysed reaction is N(2)-formyl-N(1)-(5-phospho-beta-D-ribosyl)glycinamide + L-glutamine + ATP + H2O = 2-formamido-N(1)-(5-O-phospho-beta-D-ribosyl)acetamidine + L-glutamate + ADP + phosphate + H(+). Its pathway is purine metabolism; IMP biosynthesis via de novo pathway; 5-amino-1-(5-phospho-D-ribosyl)imidazole from N(2)-formyl-N(1)-(5-phospho-D-ribosyl)glycinamide: step 1/2. Its function is as follows. Part of the phosphoribosylformylglycinamidine synthase complex involved in the purines biosynthetic pathway. Catalyzes the ATP-dependent conversion of formylglycinamide ribonucleotide (FGAR) and glutamine to yield formylglycinamidine ribonucleotide (FGAM) and glutamate. The FGAM synthase complex is composed of three subunits. PurQ produces an ammonia molecule by converting glutamine to glutamate. PurL transfers the ammonia molecule to FGAR to form FGAM in an ATP-dependent manner. PurS interacts with PurQ and PurL and is thought to assist in the transfer of the ammonia molecule from PurQ to PurL. The sequence is that of Phosphoribosylformylglycinamidine synthase subunit PurL from Metallosphaera sedula (strain ATCC 51363 / DSM 5348 / JCM 9185 / NBRC 15509 / TH2).